A 459-amino-acid chain; its full sequence is Acetyltransferase pigO (459 aa).

This sequence belongs to the trichothecene O-acetyltransferase family.

The protein operates within secondary metabolite biosynthesis. Functionally, acetyltransferase; part of the gene cluster that mediates the biosynthesis of azaphilone pigments (MonAzPs), a complex mixture of compounds with a common azaphilone skeleton very widely used as food colorants. PigM and pigO are involved in the elimination of the omega-1 alcohol with pigM acting as an O-acetyltransferase that synthesizes the O-11 acetyl intermediate whereas pigO eliminates acetic acid to yield an intermediate with a C10(11) double bond. The first step of the pathway is performed by the nrPKS pigA that forms the hexaketide precursor from successive condensations of five malonyl-CoA units, with a simple acetyl-CoA starter unit. The role of esterase pigG is not clear, but it may play at most a supplementary role in the formation of the benzaldehyde produced by the pigA nrPKS. This very reactive benzaldehyde is intercepted by the pigC ketoreductase that to provide the first stable enzyme-free MonAzPs intermediate, 6-(4-hydroxy-2-oxopentyl)-3-methyl-2,4-dioxocyclohexane carbaldehyde, also known as M7PKS-1. The FAD-dependent monooxygenase pigN hydroxylates M7PKS-1 at C-4, which triggers the formation of the pyran ring. PigJ, pigK and pigD are involved in the acetylation of the pyran ring. PigJ and pigK form the two subunits of a dedicated fungal FAS that produces the side chain fatty acyl moiety of MonAzPs and pigD transfers the fatty acyl chain to the C-4 alcohol. PigM and pigO are involved in the elimination of the omega-1 alcohol. PigM acts as an O-acetyltransferase that synthesizes the putative O-11 acetyl intermediate whereas pigO eliminates acetic acid to yield an intermediate with a C10(11) double bond. The dehydration of the C-11 alcohol followed by the reduction of the C6(7) double bond by the NAD(P)H-dependent oxidoreductase pigE increases the electrophilicity of the C-5 ketone of the resulting acyl benzopyran. This in turn sets up the C-5 ketone for an intramolecular Knoevenagel aldol condensation with the C-20 enol of the side chain. This condensation affords the characteristic linear tricyclic carbon skeletons of the yellow pigments that serve as the common precursors for the classical yellow pigments monascin and ankaflavin, orange pigments rubopunctatin and monascorubrin, and red pigments ribropunctamine and monascorubramine. The FAD-dependent oxidoreductase pigF is especially invoved in the biosynthesis of orange and red pigments via desaturation of C6(7). This is Acetyltransferase pigO from Monascus ruber (Mold).